Reading from the N-terminus, the 282-residue chain is Bifunctional protein FolD (282 aa).

NADP(+) contacts are provided by residues asparagine 165 to serine 167, serine 190, and isoleucine 231.

Belongs to the tetrahydrofolate dehydrogenase/cyclohydrolase family. Homodimer.

It catalyses the reaction (6R)-5,10-methylene-5,6,7,8-tetrahydrofolate + NADP(+) = (6R)-5,10-methenyltetrahydrofolate + NADPH. It carries out the reaction (6R)-5,10-methenyltetrahydrofolate + H2O = (6R)-10-formyltetrahydrofolate + H(+). Its pathway is one-carbon metabolism; tetrahydrofolate interconversion. Its function is as follows. Catalyzes the oxidation of 5,10-methylenetetrahydrofolate to 5,10-methenyltetrahydrofolate and then the hydrolysis of 5,10-methenyltetrahydrofolate to 10-formyltetrahydrofolate. The protein is Bifunctional protein FolD of Clostridium botulinum (strain 657 / Type Ba4).